The following is a 332-amino-acid chain: Methionine synthase (332 aa).

Zn(2+)-binding residues include His211, Cys213, and Cys296.

This sequence belongs to the archaeal MetE family. Requires Zn(2+) as cofactor.

It functions in the pathway amino-acid biosynthesis; L-methionine biosynthesis via de novo pathway. In terms of biological role, catalyzes the transfer of a methyl group to L-homocysteine resulting in methionine formation. The physiological methyl donor is unknown. This Saccharolobus solfataricus (strain ATCC 35092 / DSM 1617 / JCM 11322 / P2) (Sulfolobus solfataricus) protein is Methionine synthase.